The primary structure comprises 546 residues: Chaperonin GroEL (546 aa).

Residues 30–33 (TLGP), Lys51, 87–91 (DGTTT), Gly415, 479–481 (NAA), and Asp495 contribute to the ATP site.

This sequence belongs to the chaperonin (HSP60) family. Forms a cylinder of 14 subunits composed of two heptameric rings stacked back-to-back. Interacts with the co-chaperonin GroES.

Its subcellular location is the cytoplasm. The catalysed reaction is ATP + H2O + a folded polypeptide = ADP + phosphate + an unfolded polypeptide.. Together with its co-chaperonin GroES, plays an essential role in assisting protein folding. The GroEL-GroES system forms a nano-cage that allows encapsulation of the non-native substrate proteins and provides a physical environment optimized to promote and accelerate protein folding. The protein is Chaperonin GroEL of Xanthomonas campestris pv. phaseoli.